The chain runs to 579 residues: XK-related protein 7 (579 aa).

Over residues 1–18 (MAAKSDGAAASASPDPEG) the composition is skewed to low complexity. Residues 1 to 40 (MAAKSDGAAASASPDPEGAAGGARGSAGGRGEAAAAAGPP) are disordered. The segment covering 19–31 (AAGGARGSAGGRG) has biased composition (gly residues). 2 helical membrane passes run 59 to 79 (WVLC…WLAA) and 89 to 109 (YFSL…LLSF). The tract at residues 146–165 (GAFRTKEGSPEPGPQPAPSS) is disordered. Helical transmembrane passes span 260–280 (LLPA…LASY), 314–334 (GLAF…FIVA), 355–375 (WEEI…WFNV), 384–404 (MTLY…FWYS), and 415–435 (LIMV…MCVY). Positions 466 to 510 (ADAITSPPRSLPRTTGAERDGASAGERAGTPTPPVFQVRPGLPPT) are disordered.

Belongs to the XK family.

It is found in the cell membrane. In Homo sapiens (Human), this protein is XK-related protein 7.